The chain runs to 372 residues: Alanine racemase (372 aa).

The active-site Proton acceptor; specific for D-alanine is the Lys41. The residue at position 41 (Lys41) is an N6-(pyridoxal phosphate)lysine. Arg139 lines the substrate pocket. The active-site Proton acceptor; specific for L-alanine is Tyr268. A substrate-binding site is contributed by Met316.

Belongs to the alanine racemase family. Pyridoxal 5'-phosphate is required as a cofactor.

It catalyses the reaction L-alanine = D-alanine. Its pathway is amino-acid biosynthesis; D-alanine biosynthesis; D-alanine from L-alanine: step 1/1. In terms of biological role, catalyzes the interconversion of L-alanine and D-alanine. May also act on other amino acids. This Borreliella burgdorferi (strain ATCC 35210 / DSM 4680 / CIP 102532 / B31) (Borrelia burgdorferi) protein is Alanine racemase (alr).